Consider the following 502-residue polypeptide: Inosine-5'-monophosphate dehydrogenase 2 (502 aa).

The residue at position 2 (serine 2) is an N-acetylserine. The 60-residue stretch at methionine 166 to serine 225 folds into the CBS domain. Residues aspartate 264–serine 266 and glycine 314–glycine 316 each bind NAD(+). 2 residues coordinate K(+): glycine 316 and glycine 318. Serine 319 provides a ligand contact to IMP. Cysteine 321 contributes to the K(+) binding site. The Thioimidate intermediate role is filled by cysteine 321. Residues aspartate 354–glycine 356, glycine 377–serine 378, and tyrosine 401–glycine 405 contribute to the IMP site. Catalysis depends on arginine 417, which acts as the Proton acceptor. Glutamine 429 serves as a coordination point for IMP. 3 residues coordinate K(+): glutamate 488, glycine 489, and glycine 490.

The protein belongs to the IMPDH/GMPR family. In terms of assembly, homotetramer. It depends on K(+) as a cofactor.

The protein resides in the cytoplasm. The enzyme catalyses IMP + NAD(+) + H2O = XMP + NADH + H(+). It participates in purine metabolism; XMP biosynthesis via de novo pathway; XMP from IMP: step 1/1. Its activity is regulated as follows. Mycophenolic acid (MPA) is a non-competitive inhibitor that prevents formation of the closed enzyme conformation by binding to the same site as the amobile flap. In contrast, mizoribine monophosphate (MZP) is a competitive inhibitor that induces the closed conformation. MPA is a potent inhibitor of mammalian IMPDHs but a poor inhibitor of the bacterial enzymes. MZP is a more potent inhibitor of bacterial IMPDH. Functionally, catalyzes the conversion of inosine 5'-phosphate (IMP) to xanthosine 5'-phosphate (XMP), the first committed and rate-limiting step in the de novo synthesis of guanine nucleotides, and therefore plays an important role in the regulation of cell growth. The polypeptide is Inosine-5'-monophosphate dehydrogenase 2 (Arabidopsis thaliana (Mouse-ear cress)).